Consider the following 65-residue polypeptide: Putative beta-neurotoxin RjAa7 (65 aa).

The LCN-type CS-alpha/beta domain maps to 1–64 (KEGYPVGRDG…VWDSSTNKCG (64 aa)). Cystine bridges form between C11/C63, C15/C37, C22/C44, and C26/C46.

This sequence belongs to the long (4 C-C) scorpion toxin superfamily. Sodium channel inhibitor family. Beta subfamily. As to expression, expressed by the venom gland.

It localises to the secreted. Functionally, beta toxins bind voltage-independently at site-4 of sodium channels (Nav) and shift the voltage of activation toward more negative potentials thereby affecting sodium channel activation and promoting spontaneous and repetitive firing. The protein is Putative beta-neurotoxin RjAa7 of Rhopalurus junceus (Caribbean blue scorpion).